We begin with the raw amino-acid sequence, 294 residues long: Elongation factor Ts (294 aa).

An involved in Mg(2+) ion dislocation from EF-Tu region spans residues 80–83; that stretch reads TDFV.

Belongs to the EF-Ts family.

It is found in the cytoplasm. Its function is as follows. Associates with the EF-Tu.GDP complex and induces the exchange of GDP to GTP. It remains bound to the aminoacyl-tRNA.EF-Tu.GTP complex up to the GTP hydrolysis stage on the ribosome. The chain is Elongation factor Ts from Listeria monocytogenes serotype 4b (strain CLIP80459).